The primary structure comprises 255 residues: 5'-nucleotidase SurE (255 aa).

A divalent metal cation is bound by residues Asp-7, Asp-8, Ser-38, and Asn-90.

Belongs to the SurE nucleotidase family. A divalent metal cation serves as cofactor.

It localises to the cytoplasm. The catalysed reaction is a ribonucleoside 5'-phosphate + H2O = a ribonucleoside + phosphate. Nucleotidase that shows phosphatase activity on nucleoside 5'-monophosphates. The chain is 5'-nucleotidase SurE from Picrophilus torridus (strain ATCC 700027 / DSM 9790 / JCM 10055 / NBRC 100828 / KAW 2/3).